An 87-amino-acid chain; its full sequence is uncharacterized protein (87 aa).

Residues 43–87 (NQGYGQNFGDASGFMGTRSHVDDRDQIDSPASFESEAVNSSIKRK) form a disordered region.

This is an uncharacterized protein from Bacillus subtilis (strain 168).